We begin with the raw amino-acid sequence, 183 residues long: Integrase-like protein y4lS (183 aa).

Residues 2–136 (ARIGYARTFT…EGIAAARKRG (135 aa)) enclose the Resolvase/invertase-type recombinase catalytic domain.

It belongs to the site-specific recombinase resolvase family.

The polypeptide is Integrase-like protein y4lS (Sinorhizobium fredii (strain NBRC 101917 / NGR234)).